The sequence spans 160 residues: Lipoprotein signal peptidase (160 aa).

The next 4 membrane-spanning stretches (helical) occupy residues 7-27 (WFWLVAIIGLGLDQLTKYITV), 39-59 (LWPGVFHLTYVINTGAAFSFF), 62-82 (GAVWLRWLSLAVSLGLIFLGW), and 96-116 (GFILAGALGNGIDRFLFGYVV). Residues Asp-117 and Asp-133 contribute to the active site. Residues 126–146 (FPVFNLADTFINIGIFFLLLA) form a helical membrane-spanning segment.

It belongs to the peptidase A8 family.

It is found in the cell inner membrane. It carries out the reaction Release of signal peptides from bacterial membrane prolipoproteins. Hydrolyzes -Xaa-Yaa-Zaa-|-(S,diacylglyceryl)Cys-, in which Xaa is hydrophobic (preferably Leu), and Yaa (Ala or Ser) and Zaa (Gly or Ala) have small, neutral side chains.. The protein operates within protein modification; lipoprotein biosynthesis (signal peptide cleavage). Its function is as follows. This protein specifically catalyzes the removal of signal peptides from prolipoproteins. The sequence is that of Lipoprotein signal peptidase from Gloeothece citriformis (strain PCC 7424) (Cyanothece sp. (strain PCC 7424)).